The chain runs to 441 residues: Ribosomal protein uS12 methylthiotransferase RimO (441 aa).

Residues 7–117 (PKISFVSLGC…VLDAVHRAKP (111 aa)) form the MTTase N-terminal domain. C16, C52, C81, C148, C152, and C155 together coordinate [4Fe-4S] cluster. The Radical SAM core domain occupies 134–371 (LTPRHYAYLK…MARQQAISAR (238 aa)). A TRAM domain is found at 374-440 (KRKVGTRQQI…AYDLHGTVAG (67 aa)).

It belongs to the methylthiotransferase family. RimO subfamily. Requires [4Fe-4S] cluster as cofactor.

The protein localises to the cytoplasm. It catalyses the reaction L-aspartate(89)-[ribosomal protein uS12]-hydrogen + (sulfur carrier)-SH + AH2 + 2 S-adenosyl-L-methionine = 3-methylsulfanyl-L-aspartate(89)-[ribosomal protein uS12]-hydrogen + (sulfur carrier)-H + 5'-deoxyadenosine + L-methionine + A + S-adenosyl-L-homocysteine + 2 H(+). Its function is as follows. Catalyzes the methylthiolation of an aspartic acid residue of ribosomal protein uS12. This is Ribosomal protein uS12 methylthiotransferase RimO from Rhodopseudomonas palustris (strain HaA2).